A 310-amino-acid chain; its full sequence is 2-phospho-L-lactate transferase (310 aa).

2 residues coordinate 7,8-didemethyl-8-hydroxy-5-deazariboflavin: Asp50 and Arg89.

The protein belongs to the CofD family. Homodimer. The cofactor is Mg(2+).

It catalyses the reaction (2S)-lactyl-2-diphospho-5'-guanosine + 7,8-didemethyl-8-hydroxy-5-deazariboflavin = oxidized coenzyme F420-0 + GMP + H(+). It functions in the pathway cofactor biosynthesis; coenzyme F420 biosynthesis. Its function is as follows. Catalyzes the transfer of the 2-phospholactate moiety from (2S)-lactyl-2-diphospho-5'-guanosine to 7,8-didemethyl-8-hydroxy-5-deazariboflavin (FO) with the formation of oxidized coenzyme F420-0 and GMP. The sequence is that of 2-phospho-L-lactate transferase from Methanopyrus kandleri (strain AV19 / DSM 6324 / JCM 9639 / NBRC 100938).